We begin with the raw amino-acid sequence, 1040 residues long: Multidrug resistance protein MdtB (1040 aa).

A run of 12 helical transmembrane segments spans residues 25–45 (LLMA…PVAA), 347–367 (LMLA…NIPA), 369–389 (IIPG…MVFL), 396–416 (LTLM…IVVI), 440–460 (IGFT…PLLF), 472–492 (FAVT…TLTP), 537–557 (WLTL…WIVI), 863–883 (LGST…VLGV), 888–908 (FIHP…ALLA), 910–930 (IIAG…LIGI), 968–988 (ILMT…STGV), and 998–1018 (IAMV…TPVI).

This sequence belongs to the resistance-nodulation-cell division (RND) (TC 2.A.6) family. MdtB subfamily. Part of a tripartite efflux system composed of MdtA, MdtB and MdtC. MdtB forms a heteromultimer with MdtC.

The protein resides in the cell inner membrane. The protein is Multidrug resistance protein MdtB of Salmonella dublin (strain CT_02021853).